The chain runs to 295 residues: 4-hydroxy-tetrahydrodipicolinate synthase (295 aa).

T46 is a pyruvate binding site. Residue Y134 is the Proton donor/acceptor of the active site. K162 serves as the catalytic Schiff-base intermediate with substrate. A pyruvate-binding site is contributed by I205.

This sequence belongs to the DapA family. In terms of assembly, homotetramer; dimer of dimers.

Its subcellular location is the cytoplasm. It catalyses the reaction L-aspartate 4-semialdehyde + pyruvate = (2S,4S)-4-hydroxy-2,3,4,5-tetrahydrodipicolinate + H2O + H(+). It participates in amino-acid biosynthesis; L-lysine biosynthesis via DAP pathway; (S)-tetrahydrodipicolinate from L-aspartate: step 3/4. In terms of biological role, catalyzes the condensation of (S)-aspartate-beta-semialdehyde [(S)-ASA] and pyruvate to 4-hydroxy-tetrahydrodipicolinate (HTPA). This chain is 4-hydroxy-tetrahydrodipicolinate synthase, found in Anaeromyxobacter dehalogenans (strain 2CP-1 / ATCC BAA-258).